The chain runs to 173 residues: Co-chaperone protein HscB (173 aa).

The J domain maps to 2–74; it reads DYFTLFGLPV…LKRAEYMLSL (73 aa).

The protein belongs to the HscB family. Interacts with HscA and stimulates its ATPase activity. Interacts with IscU.

In terms of biological role, co-chaperone involved in the maturation of iron-sulfur cluster-containing proteins. Seems to help targeting proteins to be folded toward HscA. The sequence is that of Co-chaperone protein HscB from Serratia proteamaculans (strain 568).